Reading from the N-terminus, the 136-residue chain is MLSPKRTRFRKQHRGRMKGKSCRGNRICFGRYALQALEPAWITARQIEAGRRAITRYARRGGKIWVRIFPDKPVTLRPTETRMGSGKGSPEYWVAIVKPGRILYEMGGVSETIARAAMEIAASKMPIRSQFIRLEI.

Residues Met-1 to Lys-20 form a disordered region.

The protein belongs to the universal ribosomal protein uL16 family. As to quaternary structure, part of the 50S ribosomal subunit.

It is found in the plastid. The protein resides in the chloroplast. The polypeptide is Large ribosomal subunit protein uL16c (Lolium perenne (Perennial ryegrass)).